The primary structure comprises 50 residues: U2-ctenitoxin-Pk1a (50 aa).

Disulfide bonds link cysteine 1/cysteine 15, cysteine 8/cysteine 21, cysteine 12/cysteine 47, cysteine 14/cysteine 31, and cysteine 23/cysteine 29.

In terms of tissue distribution, expressed by the venom gland.

It localises to the secreted. Functionally, insecticidal neurotoxin that reversibly inhibits the N-methyl-D-aspartate (NMDA)-subtype of ionotropic glutamate receptor (GRIN) and inhibits inactivation of insect sodium channels (Nav). In vivo, is highly toxic to insects. The sequence is that of U2-ctenitoxin-Pk1a from Phoneutria keyserlingi (Brazilian wandering spider).